We begin with the raw amino-acid sequence, 284 residues long: Aminoglycoside 6-adenylyltransferase (284 aa).

As to quaternary structure, homodimer.

The protein localises to the cytoplasm. It catalyses the reaction streptomycin + ATP = 6-O-adenylylstreptomycin + diphosphate. The enzyme catalyses streptomycin + GTP = 6-O-guanylylstreptomycin + diphosphate. The catalysed reaction is streptidine + ATP = 6-O-adenylylstreptidine + diphosphate. In terms of biological role, mediates bacterial resistance to streptomycin. Adenylates streptomycin on the O-6 residue. Adenylates streptidine on the O-6 residue. Does not act on spectinomycin, neomycin-B or kanamycin. Specific for ATP and GTP nucleotides incorporating a purine ring. No reaction with CTP or UTP. The protein is Aminoglycoside 6-adenylyltransferase of Bacillus subtilis (strain 168).